The primary structure comprises 359 residues: Type-1 angiotensin II receptor (359 aa).

Residues 1–25 (MILNSSTEDGIKRIQDDCPKAGRHN) lie on the Extracellular side of the membrane. N4 is a glycosylation site (N-linked (GlcNAc...) asparagine). The angiotensin II site is built by Q15 and D17. Cystine bridges form between C18-C274 and C101-C180. The helical transmembrane segment at 26–55 (YIFVMIPTLYSIIFVVGIFGNSLVVIVIYF) threads the bilayer. Residues 56 to 61 (YMKLKT) lie on the Cytoplasmic side of the membrane. A helical membrane pass occupies residues 62–89 (VASVFLLNLALADLCFLLTLPLWAVYTA). Residues 90–98 (MEYRWPFGN) are Extracellular-facing. The chain crosses the membrane as a helical span at residues 99-125 (YLCKIASASVSFNLYASVFLLTCLSID). At 126 to 141 (RYLAIVHPMKSRLRRT) the chain is on the cytoplasmic side. Residues 142–165 (MLVAKVTCIIIWLLAGLASLPAII) traverse the membrane as a helical segment. Over 166–190 (HRNVFFIENTNITVCAFHYESQNST) the chain is Extracellular. Residue R167 participates in angiotensin II binding. N176 carries an N-linked (GlcNAc...) asparagine glycan. Angiotensin II is bound by residues F182, H183, and Y184. N188 is a glycosylation site (N-linked (GlcNAc...) asparagine). The chain crosses the membrane as a helical span at residues 191–216 (LPIGLGLTKNILGFLFPFLIILTSYT). Angiotensin II is bound at residue K199. At 217–239 (LIWKALKKAYEIQKNKPRNDDIF) the chain is on the cytoplasmic side. The helical transmembrane segment at 240–268 (KIIMAIVLFFFFSWIPHQIFTFLDVLIQL) threads the bilayer. The Extracellular portion of the chain corresponds to 269–278 (GIIRDCRIAD). A helical membrane pass occupies residues 279–304 (IVDTAMPITICIAYFNNCLNPLFYGF). Residues 305–359 (LGKKFKKYFLQLLKYIPPKAKSHSNLSTKMSTLSYRPSDNVSSSTKKPAPCFEVE) are Cytoplasmic-facing. Over residues 335–350 (STLSYRPSDNVSSSTK) the composition is skewed to polar residues. The tract at residues 335–359 (STLSYRPSDNVSSSTKKPAPCFEVE) is disordered. A lipid anchor (S-palmitoyl cysteine) is attached at C355.

It belongs to the G-protein coupled receptor 1 family. Interacts with MAS1. Interacts with ARRB1. Interacts with FLNA (via filamin repeat 21); increases PKA-mediated phosphorylation of FLNA. C-terminal Ser or Thr residues may be phosphorylated.

It localises to the cell membrane. Its function is as follows. Receptor for angiotensin II, a vasoconstricting peptide, which acts as a key regulator of blood pressure and sodium retention by the kidney. The activated receptor in turn couples to G-alpha proteins G(q) (GNAQ, GNA11, GNA14 or GNA15) and thus activates phospholipase C and increases the cytosolic Ca(2+) concentrations, which in turn triggers cellular responses such as stimulation of protein kinase C. In Pan troglodytes (Chimpanzee), this protein is Type-1 angiotensin II receptor (AGTR1).